We begin with the raw amino-acid sequence, 278 residues long: Probable velvet family sexual development regulator SCHCODRAFT_28806 (278 aa).

In terms of domain architecture, Velvet spans 51 to 255; the sequence is GRTIRASLDE…ARVGVRLSVR (205 aa). Residues 257–278 are disordered; that stretch reads TGKKATTKRRKRSDSFDEDDSS.

This sequence belongs to the velvet family.

It is found in the nucleus. Functionally, velvet-domain-containing protein that probably acts as a positive regulator of sexual development. In Schizophyllum commune (strain H4-8 / FGSC 9210) (Split gill fungus), this protein is Probable velvet family sexual development regulator SCHCODRAFT_28806.